The sequence spans 266 residues: Endoplasmic reticulum vesicle protein 25 (266 aa).

Residues 1–26 form the signal peptide; sequence MGSSPQSSTRTLLGLLFLLLVQLSSA. The Lumenal portion of the chain corresponds to 27 to 188; sequence LKFDLHASSG…TNESTNERVK (162 aa). One can recognise a GOLD domain in the interval 39 to 129; that stretch reads ERCIRNFVFK…YKSVELDVEI (91 aa). The helical transmembrane segment at 189–209 threads the bilayer; sequence WFAFGTMGMLVGLGVWQVVYL. The Cytoplasmic portion of the chain corresponds to 210–266; the sequence is RAYFRYVDFPVSWRVDGVVANCCSCCEQVEASYLRSSRVVFWSPLVMWTRLSWLILR.

Belongs to the EMP24/GP25L family.

Its subcellular location is the endoplasmic reticulum membrane. It is found in the golgi apparatus membrane. Functionally, constituent of COPII-coated endoplasmic reticulum-derived transport vesicles. Required for efficient transport of a subset of secretory proteins to the Golgi. Facilitates retrograde transport from the Golgi to the endoplasmic reticulum. The chain is Endoplasmic reticulum vesicle protein 25 (erv25) from Aspergillus fumigatus (strain ATCC MYA-4609 / CBS 101355 / FGSC A1100 / Af293) (Neosartorya fumigata).